The chain runs to 317 residues: Inositol oxygenase 4 (317 aa).

Substrate contacts are provided by residues arginine 58 and 115–117 (DES). 3 residues coordinate Fe cation: histidine 128, histidine 153, and aspartate 154. Residues lysine 157 and 174-175 (GD) contribute to the substrate site. Histidine 226, histidine 252, and aspartate 285 together coordinate Fe cation. Position 252–253 (252–253 (HS)) interacts with substrate.

It belongs to the myo-inositol oxygenase family. Fe cation serves as cofactor. Expressed in flowers, leaves, siliques, and to a lesser extent in roots.

It localises to the cytoplasm. It catalyses the reaction myo-inositol + O2 = D-glucuronate + H2O + H(+). Its pathway is polyol metabolism; myo-inositol degradation into D-glucuronate; D-glucuronate from myo-inositol: step 1/1. Functionally, catalyzes the oxygenative cleavage of myo-inositol to D-glucuronate. Involved in the biosynthesis of UDP-glucuronic acid (UDP-GlcA), providing nucleotide sugars for cell-wall polymers. May be also involved in plant ascorbate biosynthesis. This Arabidopsis thaliana (Mouse-ear cress) protein is Inositol oxygenase 4 (MIOX4).